The sequence spans 152 residues: Protein-export protein SecB (152 aa).

It belongs to the SecB family. As to quaternary structure, homotetramer, a dimer of dimers. One homotetramer interacts with 1 SecA dimer.

Its subcellular location is the cytoplasm. Functionally, one of the proteins required for the normal export of preproteins out of the cell cytoplasm. It is a molecular chaperone that binds to a subset of precursor proteins, maintaining them in a translocation-competent state. It also specifically binds to its receptor SecA. This is Protein-export protein SecB from Rickettsia peacockii (strain Rustic).